A 175-amino-acid chain; its full sequence is RNA pyrophosphohydrolase (175 aa).

The Nudix hydrolase domain occupies 8–159 (PYRTCVGMML…KRPVYERVVK (152 aa)). The Nudix box signature appears at 47-68 (GGVDPGEDPWTAAKRELYEETS).

This sequence belongs to the Nudix hydrolase family. RppH subfamily. A divalent metal cation is required as a cofactor.

Accelerates the degradation of transcripts by removing pyrophosphate from the 5'-end of triphosphorylated RNA, leading to a more labile monophosphorylated state that can stimulate subsequent ribonuclease cleavage. This Rhodopseudomonas palustris (strain BisB18) protein is RNA pyrophosphohydrolase.